The following is a 407-amino-acid chain: 12S rRNA N(4)-cytidine methyltransferase METTL15 (407 aa).

S-adenosyl-L-methionine is bound by residues 100 to 102 (GGH), Asp119, Phe146, Asp169, and Gln176. Ser358 carries the phosphoserine modification.

This sequence belongs to the methyltransferase superfamily. RsmH family.

It localises to the mitochondrion matrix. The catalysed reaction is cytidine(839) in 12S rRNA + S-adenosyl-L-methionine = N(4)-methylcytidine(839) in 12S rRNA + S-adenosyl-L-homocysteine + H(+). Its function is as follows. N4-methylcytidine (m4C) methyltransferase responsible for the methylation of position C839 in mitochondrial 12S rRNA. Involved in the stabilization of 12S rRNA folding, therefore facilitating the assembly of the mitochondrial small ribosomal subunits. The protein is 12S rRNA N(4)-cytidine methyltransferase METTL15 of Homo sapiens (Human).